Reading from the N-terminus, the 243-residue chain is Uridylate kinase (243 aa).

An ATP-binding site is contributed by 15–18 (KISG). G57 serves as a coordination point for UMP. 2 residues coordinate ATP: G58 and R62. Residues D77 and 138-145 (TGNPFFTT) contribute to the UMP site. Residues T165, F171, and D174 each coordinate ATP.

It belongs to the UMP kinase family. As to quaternary structure, homohexamer.

It is found in the cytoplasm. It carries out the reaction UMP + ATP = UDP + ADP. It participates in pyrimidine metabolism; CTP biosynthesis via de novo pathway; UDP from UMP (UMPK route): step 1/1. Inhibited by UTP. Catalyzes the reversible phosphorylation of UMP to UDP. The chain is Uridylate kinase from Blochmanniella floridana.